A 24-amino-acid polypeptide reads, in one-letter code: Gaegurin-6 (24 aa).

A disulfide bond links Cys18 and Cys24.

It belongs to the frog skin active peptide (FSAP) family. Brevinin subfamily. In terms of assembly, monomer. As to expression, expressed by the skin glands.

Its subcellular location is the secreted. In terms of biological role, has a non-hemolytic activity. Has a broad spectrum of activity against both Gram-positive and Gram-negative bacteria, fungi and protozoa. The sequence is that of Gaegurin-6 (GGN6) from Glandirana rugosa (Japanese wrinkled frog).